A 1000-amino-acid chain; its full sequence is SEC23-interacting protein (1000 aa).

The interval Met1–Glu367 is interaction with SEC23A. The tract at residues Phe133–Pro252 is disordered. Residues Ser154–Tyr167 show a composition bias toward low complexity. A compositionally biased stretch (pro residues) spans Pro207–Pro218. Positions Ser235–Pro246 are enriched in low complexity. The region spanning Lys644–Leu707 is the SAM domain. The interval Ala716 to Lys748 is disordered. A phosphoserine mark is found at Ser737 and Ser926. Residues Leu779 to Arg989 form the DDHD domain.

It belongs to the PA-PLA1 family. Interacts with SEC23A. In terms of tissue distribution, ubiquitously expressed with stronger levels detected in heart, liver and skeletal muscle.

Its subcellular location is the cytoplasmic vesicle. It localises to the COPII-coated vesicle membrane. The protein localises to the endoplasmic reticulum. Its function is as follows. Plays a role in the organization of endoplasmic reticulum exit sites. Specifically binds to phosphatidylinositol 3-phosphate (PI(3)P), phosphatidylinositol 4-phosphate (PI(4)P) and phosphatidylinositol 5-phosphate (PI(5)P). This Homo sapiens (Human) protein is SEC23-interacting protein (SEC23IP).